We begin with the raw amino-acid sequence, 75 residues long: Large ribosomal subunit protein uL29 (75 aa).

It belongs to the universal ribosomal protein uL29 family.

This is Large ribosomal subunit protein uL29 from Ureaplasma urealyticum serovar 10 (strain ATCC 33699 / Western).